The sequence spans 277 residues: Bifunctional protein FolD (277 aa).

Residues 164 to 166, Ser-189, and Thr-230 contribute to the NADP(+) site; that span reads GRS.

This sequence belongs to the tetrahydrofolate dehydrogenase/cyclohydrolase family. As to quaternary structure, homodimer.

It catalyses the reaction (6R)-5,10-methylene-5,6,7,8-tetrahydrofolate + NADP(+) = (6R)-5,10-methenyltetrahydrofolate + NADPH. The enzyme catalyses (6R)-5,10-methenyltetrahydrofolate + H2O = (6R)-10-formyltetrahydrofolate + H(+). It participates in one-carbon metabolism; tetrahydrofolate interconversion. Catalyzes the oxidation of 5,10-methylenetetrahydrofolate to 5,10-methenyltetrahydrofolate and then the hydrolysis of 5,10-methenyltetrahydrofolate to 10-formyltetrahydrofolate. The polypeptide is Bifunctional protein FolD (Clostridium perfringens (strain 13 / Type A)).